The primary structure comprises 626 residues: Mitogen-activated protein kinase kinase kinase 3 (626 aa).

The region spanning 44 to 123 (DVRIKFEHNG…KSLRILLLSQ (80 aa)) is the PB1 domain. Composition is skewed to polar residues over residues 146–155 (QSAGDINTIY), 165–174 (LSVSSQNPGR), and 219–232 (SAENSLSGSCQSLD). Disordered regions lie at residues 146 to 184 (QSAGDINTIYQPPEPRSRHLSVSSQNPGRSSPPPGYVPE) and 218 to 262 (SSAE…SDRE). The residue at position 147 (S147) is a Phosphoserine. S166 is modified (phosphoserine; by SGK1). A phosphoserine mark is found at S250 and S312. Position 337 is a phosphoserine; by SGK1 (S337). S340 bears the Phosphoserine mark. The Protein kinase domain occupies 362 to 622 (WRRGKLLGQG…AEELLTHHFA (261 aa)). Residues 368–376 (LGQGAFGRV) and K391 each bind ATP. D489 serves as the catalytic Proton acceptor.

It belongs to the protein kinase superfamily. STE Ser/Thr protein kinase family. MAP kinase kinase kinase subfamily. As to quaternary structure, binds both upstream activators and downstream substrates in multimolecular complexes. Part of a complex with MAP2K3, RAC1 and CCM2. Interacts with MAP2K5 and SPAG9. It depends on Mg(2+) as a cofactor. In terms of processing, phosphorylation at Ser-166 and Ser-337 by SGK1 inhibits its activity.

It carries out the reaction L-seryl-[protein] + ATP = O-phospho-L-seryl-[protein] + ADP + H(+). The catalysed reaction is L-threonyl-[protein] + ATP = O-phospho-L-threonyl-[protein] + ADP + H(+). Activated by phosphorylation on Thr-530. Functionally, component of a protein kinase signal transduction cascade. Mediates activation of the NF-kappa-B, AP1 and DDIT3 transcriptional regulators. This Homo sapiens (Human) protein is Mitogen-activated protein kinase kinase kinase 3 (MAP3K3).